A 514-amino-acid chain; its full sequence is Exoglucanase 1 (514 aa).

The first 17 residues, 1-17 (MYRKLAVISAFLATARA), serve as a signal peptide directing secretion. The residue at position 18 (Q18) is a Pyrrolidone carboxylic acid. Residues 18–453 (QSACTLQSET…GSTGNPSGGN (436 aa)) form a catalytic region. 10 disulfide bridges follow: C21-C89, C36-C42, C67-C88, C78-C84, C155-C414, C189-C227, C193-C226, C247-C273, C255-C260, and C278-C348. N-linked (GlcNAc) asparagine glycosylation is present at N62. E229 functions as the Nucleophile in the catalytic mechanism. Residue E234 is the Proton donor/acceptor of the active site. The N-linked (GlcNAc...) (high mannose) asparagine glycan is linked to N287. N401 is a glycosylation site (N-linked (GlcNAc) asparagine). Residues 401-437 (NETSSTPGAVRGSCSTSSGVPAQVESQSPNAKVTFSN) are compositionally biased toward polar residues. Residues 401–481 (NETSSTPGAV…TGSSPGPTQS (81 aa)) are disordered. The segment at 454–478 (PPGGNPPGTTTTRRPATTTGSSPGP) is linker. Residues 460 to 479 (PGTTTTRRPATTTGSSPGPT) are compositionally biased toward low complexity. T462 carries O-linked (Man) threonine glycosylation. T463, T464, and T465 each carry an O-linked (Man...) threonine glycan. Residue T470 is glycosylated (O-linked (Man) threonine). 2 O-linked (Man...) threonine glycosylation sites follow: T471 and T472. 2 O-linked (Man) serine glycosylation sites follow: S474 and S475. In terms of domain architecture, CBM1 spans 478–514 (PTQSHYGQCGGIGYSGPTVCASGTTCQVLNPYYSQCL). O-linked (Man) threonine glycosylation occurs at T479. Residues S481 and S492 are each glycosylated (O-linked (Man) serine). Disulfide bonds link C486–C503 and C497–C513.

It belongs to the glycosyl hydrolase 7 (cellulase C) family. N-glycosylated. A high mannose glycan is attached to Asn-287 (predominantly Man(8)GlcNAc(2)) and single GlcNAc occupancy is observed at Asn-62 and Asn-401 with some site heterogeneity depending on strains and fermentation conditions. Post-translationally, O-glycosylated. Within the linker domain, all 8 threonines are variably glycosylated with between at least one, and up to three, mannose residues per site. All serines in this domain are at least partially glycosylated with a single mannose residue. O-glycosylation of the cellulase linker provides protection from proteolysis. Linker glycans also contribute to binding affinity of cellobiohydrolases to cellulose.

Its subcellular location is the secreted. It catalyses the reaction Hydrolysis of (1-&gt;4)-beta-D-glucosidic linkages in cellulose and cellotetraose, releasing cellobiose from the non-reducing ends of the chains.. Functionally, exocellobiohydrolases (CBH) that catalyzes the hydrolysis of 1,4-beta-D-glucosidic bonds in cellulose to release the disaccharide cellobiose. The degradation of cellulose involves an interplay between different cellulolytic enzymes. Hydrolysis starts with endoglucanases (EGs), which cut internal beta-1,4-glucosidic bonds in cellulose to reduce the polymerization degree of the substrate and create new chain ends for exocellobiohydrolases (CBHs). The CBHs release the disaccharide cellobiose from the non-reducing end of the cellulose polymer chain. Finally, beta-1,4-glucosidases hydrolyze the cellobiose and other short cello-oligosaccharides into glucose units. The polypeptide is Exoglucanase 1 (cbh1) (Hypocrea jecorina (strain ATCC 56765 / BCRC 32924 / NRRL 11460 / Rut C-30) (Trichoderma reesei)).